The sequence spans 383 residues: Outer membrane protein S2 (383 aa).

The first 21 residues, 1–21 (MKRKVLALVIPALLAAGAAHA), serve as a signal peptide directing secretion.

It belongs to the Gram-negative porin family. As to quaternary structure, homotrimer.

It is found in the cell outer membrane. In terms of biological role, forms pores that allow passive diffusion of small molecules across the outer membrane. The chain is Outer membrane protein S2 (ompS2) from Salmonella typhi.